The primary structure comprises 72 residues: Translation initiation factor IF-1 (72 aa).

Residues 1–72 (MAKDDVIEIE…TKGRITYRFK (72 aa)) enclose the S1-like domain.

It belongs to the IF-1 family. In terms of assembly, component of the 30S ribosomal translation pre-initiation complex which assembles on the 30S ribosome in the order IF-2 and IF-3, IF-1 and N-formylmethionyl-tRNA(fMet); mRNA recruitment can occur at any time during PIC assembly.

Its subcellular location is the cytoplasm. Functionally, one of the essential components for the initiation of protein synthesis. Stabilizes the binding of IF-2 and IF-3 on the 30S subunit to which N-formylmethionyl-tRNA(fMet) subsequently binds. Helps modulate mRNA selection, yielding the 30S pre-initiation complex (PIC). Upon addition of the 50S ribosomal subunit IF-1, IF-2 and IF-3 are released leaving the mature 70S translation initiation complex. The chain is Translation initiation factor IF-1 from Ligilactobacillus salivarius (strain UCC118) (Lactobacillus salivarius).